Reading from the N-terminus, the 533-residue chain is CEP295 N-terminal-like protein (533 aa).

4 disordered regions span residues 1-40 (MQRD…TTLQ), 84-176 (RSMG…RVTR), 286-333 (LKAD…ETTE), and 370-399 (AGTS…LEDE). A coiled-coil region spans residues 40–72 (QQWKARQLQRLAEELKAEWQEARLQQVRQAERL). Residues 107–126 (KERNRAAFREERGRREEHPR) show a composition bias toward basic and acidic residues. The stretch at 416 to 531 (MALRQKQKAE…ARKRLQEFQK (116 aa)) forms a coiled coil.

In terms of tissue distribution, expressed in mature spermatozoa (at protein level). Detected in retina, lung and kidney. In brain, highly expressed in brain-stem, cerebral cortex and thalamus with lesser expression in cerebellum and hippocampus.

The protein resides in the cell projection. It localises to the cilium. The sequence is that of CEP295 N-terminal-like protein from Mus musculus (Mouse).